The following is a 938-amino-acid chain: Chaperone protein ClpD1, chloroplastic (938 aa).

A chloroplast-targeting transit peptide spans 1-83 (MEVCCCSTSS…FERFTERAVK (83 aa)). Repeat regions lie at residues 84 to 145 (AVVL…TPGA) and 159 to 224 (FSGS…LQAE). Residues 84–224 (AVVLSQREAK…SVALTRLQAE (141 aa)) form the Clp R domain. Positions 234–255 (GASSFKVPKKSPAGAGRSAFSK) are disordered. The segment at 266-519 (LDQFCLDLTT…RMESFNRKKE (254 aa)) is i. Residues 311 to 318 (GEAGVGKT) and 660 to 667 (GPTGVGKT) contribute to the ATP site. Residues 586–777 (VGTEEIARVA…LIVMTSNIGS (192 aa)) form an II region.

It belongs to the ClpA/ClpB family. ClpD subfamily. As to expression, expressed in stems, culms and leaves.

Its subcellular location is the plastid. It is found in the chloroplast. In terms of biological role, molecular chaperone that may function in heat stress response. May interact with a ClpP-like protease involved in degradation of denatured proteins in the chloroplast. Chaperone involved in response to abiotic stresses. Plays a positive role during dehydration and salt stress. This chain is Chaperone protein ClpD1, chloroplastic, found in Oryza sativa subsp. japonica (Rice).